The following is a 163-amino-acid chain: Ribosome maturation factor RimP (163 aa).

This sequence belongs to the RimP family.

Its subcellular location is the cytoplasm. Required for maturation of 30S ribosomal subunits. In Bordetella petrii (strain ATCC BAA-461 / DSM 12804 / CCUG 43448), this protein is Ribosome maturation factor RimP.